Here is a 469-residue protein sequence, read N- to C-terminus: Argininosuccinate lyase (469 aa).

This sequence belongs to the lyase 1 family. Argininosuccinate lyase subfamily.

The protein localises to the cytoplasm. It catalyses the reaction 2-(N(omega)-L-arginino)succinate = fumarate + L-arginine. Its pathway is amino-acid biosynthesis; L-arginine biosynthesis; L-arginine from L-ornithine and carbamoyl phosphate: step 3/3. This is Argininosuccinate lyase from Novosphingobium aromaticivorans (strain ATCC 700278 / DSM 12444 / CCUG 56034 / CIP 105152 / NBRC 16084 / F199).